The chain runs to 361 residues: MTRAFNFSAGPATLPESVLRQAQEEMVEWNGVGASIVEISHRSADFMAVAAAAEADLRTLLSIPDDYAVLFTSGGATTIQALLPLNFAAPGQAVDYVVSGHWGKTAIKQATPYVDVRVAADGQPGGYVDIPPVASWTLSPHAAYVHITANETIHGVEFRDTPDVGTLPLFADFSSSIASEPLDIRRYGLIYAGAQKNLGPVGISVVIVRRELLERAGQPRADIFNYASHVARDSMLNTPPTWNWYLLGLTVKWMLEQGGVAAFAQRNAEKAALVYGAIDGSGGFYRNQVMPTVRSRMNIPFFLGDEQLDALFVSESKAAGLLALKGHKAVGGIRASLYNAMPVAGAQALVAFMHDFQQRHG.

Residue Arg42 participates in L-glutamate binding. Residues 76–77, Trp102, Thr152, Asp172, and Gln195 each bind pyridoxal 5'-phosphate; that span reads AT. The residue at position 196 (Lys196) is an N6-(pyridoxal phosphate)lysine. A pyridoxal 5'-phosphate-binding site is contributed by 237–238; it reads NT.

This sequence belongs to the class-V pyridoxal-phosphate-dependent aminotransferase family. SerC subfamily. As to quaternary structure, homodimer. Pyridoxal 5'-phosphate serves as cofactor.

It is found in the cytoplasm. It catalyses the reaction O-phospho-L-serine + 2-oxoglutarate = 3-phosphooxypyruvate + L-glutamate. The enzyme catalyses 4-(phosphooxy)-L-threonine + 2-oxoglutarate = (R)-3-hydroxy-2-oxo-4-phosphooxybutanoate + L-glutamate. The protein operates within amino-acid biosynthesis; L-serine biosynthesis; L-serine from 3-phospho-D-glycerate: step 2/3. Its pathway is cofactor biosynthesis; pyridoxine 5'-phosphate biosynthesis; pyridoxine 5'-phosphate from D-erythrose 4-phosphate: step 3/5. Catalyzes the reversible conversion of 3-phosphohydroxypyruvate to phosphoserine and of 3-hydroxy-2-oxo-4-phosphonooxybutanoate to phosphohydroxythreonine. The protein is Phosphoserine aminotransferase of Xanthomonas campestris pv. campestris (strain 8004).